Here is a 100-residue protein sequence, read N- to C-terminus: Large ribosomal subunit protein eL36A (100 aa).

T2 is modified (N-acetylthreonine).

The protein belongs to the eukaryotic ribosomal protein eL36 family. As to quaternary structure, component of the large ribosomal subunit (LSU). Mature yeast ribosomes consist of a small (40S) and a large (60S) subunit. The 40S small subunit contains 1 molecule of ribosomal RNA (18S rRNA) and 33 different proteins (encoded by 57 genes). The large 60S subunit contains 3 rRNA molecules (25S, 5.8S and 5S rRNA) and 46 different proteins (encoded by 81 genes). Post-translationally, N-terminally acetylated by acetyltransferase NatA.

It is found in the cytoplasm. Component of the ribosome, a large ribonucleoprotein complex responsible for the synthesis of proteins in the cell. The small ribosomal subunit (SSU) binds messenger RNAs (mRNAs) and translates the encoded message by selecting cognate aminoacyl-transfer RNA (tRNA) molecules. The large subunit (LSU) contains the ribosomal catalytic site termed the peptidyl transferase center (PTC), which catalyzes the formation of peptide bonds, thereby polymerizing the amino acids delivered by tRNAs into a polypeptide chain. The nascent polypeptides leave the ribosome through a tunnel in the LSU and interact with protein factors that function in enzymatic processing, targeting, and the membrane insertion of nascent chains at the exit of the ribosomal tunnel. This is Large ribosomal subunit protein eL36A from Saccharomyces cerevisiae (strain ATCC 204508 / S288c) (Baker's yeast).